A 329-amino-acid polypeptide reads, in one-letter code: 3-isopropylmalate dehydrogenase (329 aa).

Substrate contacts are provided by Arg-83, Arg-93, Arg-114, and Asp-200. Residues Asp-200, Asp-224, and Asp-228 each coordinate Mg(2+). Gly-257–Asn-269 contacts NAD(+).

Belongs to the isocitrate and isopropylmalate dehydrogenases family. Homotetramer. The cofactor is Mg(2+). Mn(2+) is required as a cofactor.

The protein resides in the cytoplasm. It catalyses the reaction (2R,3S)-3-isopropylmalate + NAD(+) = 4-methyl-2-oxopentanoate + CO2 + NADH. It functions in the pathway amino-acid biosynthesis; L-leucine biosynthesis; L-leucine from 3-methyl-2-oxobutanoate: step 3/4. In terms of biological role, catalyzes the oxidation of 3-carboxy-2-hydroxy-4-methylpentanoate (3-isopropylmalate) to 3-carboxy-4-methyl-2-oxopentanoate. The product decarboxylates to 4-methyl-2 oxopentanoate. The sequence is that of 3-isopropylmalate dehydrogenase (leuB) from Methanothermobacter thermautotrophicus (strain ATCC 29096 / DSM 1053 / JCM 10044 / NBRC 100330 / Delta H) (Methanobacterium thermoautotrophicum).